A 249-amino-acid chain; its full sequence is 5'-nucleotidase SurE (249 aa).

Residues Asp-8, Asp-9, Ser-39, and Asn-91 each contribute to the a divalent metal cation site.

It belongs to the SurE nucleotidase family. Requires a divalent metal cation as cofactor.

The protein localises to the cytoplasm. It catalyses the reaction a ribonucleoside 5'-phosphate + H2O = a ribonucleoside + phosphate. Its function is as follows. Nucleotidase that shows phosphatase activity on nucleoside 5'-monophosphates. The sequence is that of 5'-nucleotidase SurE from Pseudomonas paraeruginosa (strain DSM 24068 / PA7) (Pseudomonas aeruginosa (strain PA7)).